A 67-amino-acid polypeptide reads, in one-letter code: Conotoxin TxMMSK-01 (67 aa).

The signal sequence occupies residues 1–20 (MMSKLGVLLITCLLLFPLTA). A propeptide spanning residues 21–53 (VPLDGDQPADQPAERLQDDISSENHPFFDPVKR) is cleaved from the precursor. Disulfide bonds link cysteine 54–cysteine 66, cysteine 55–cysteine 62, and cysteine 59–cysteine 65. Proline 64 is subject to 4-hydroxyproline. Cysteine 66 carries the cysteine amide modification.

This sequence belongs to the conotoxin M superfamily. In terms of tissue distribution, expressed by the venom duct.

The protein localises to the secreted. This is Conotoxin TxMMSK-01 from Conus textile (Cloth-of-gold cone).